The chain runs to 518 residues: Calcium-dependent protein kinase 1 (518 aa).

A compositionally biased stretch (basic residues) spans 1 to 10; that stretch reads MGNRTSRHHR. Residues 1-49 are disordered; sequence MGNRTSRHHRAAPEQPPPQPKPKPQPQQQQQQWPRPQQPTPPPAAAPDA. Glycine 2 is lipidated: N-myristoyl glycine. Pro residues predominate over residues 14–25; that stretch reads EQPPPQPKPKPQ. Over residues 26-35 the composition is skewed to low complexity; the sequence is PQQQQQQWPR. Pro residues predominate over residues 36–45; sequence PQQPTPPPAA. The Protein kinase domain maps to 66 to 324; the sequence is YTFGRELGRG…SAEILNHPWI (259 aa). ATP-binding positions include 72–80 and lysine 95; that span reads LGRGQFGVT. The active-site Proton acceptor is the aspartate 190. The tract at residues 330–360 is autoinhibitory domain; the sequence is APDKPLDITVISRMKQFRAMNKLKKVALKVV. EF-hand domains follow at residues 367 to 402, 403 to 438, 439 to 474, and 475 to 509; these read EEIT…LGTK, ISES…MNRL, EKED…YDMG, and DDKT…NNPE. Positions 380, 382, 384, 386, 391, 416, 418, 420, 422, 427, 452, 454, 456, 458, 463, 487, 489, 491, 493, and 498 each coordinate Ca(2+).

The protein belongs to the protein kinase superfamily. Ser/Thr protein kinase family. CDPK subfamily. Expressed in roots and leaf blades.

The protein localises to the membrane. The catalysed reaction is L-seryl-[protein] + ATP = O-phospho-L-seryl-[protein] + ADP + H(+). It catalyses the reaction L-threonyl-[protein] + ATP = O-phospho-L-threonyl-[protein] + ADP + H(+). With respect to regulation, activated by calcium. Autophosphorylation may play an important role in the regulation of the kinase activity. May play a role in signal transduction pathways that involve calcium as a second messenger. In Oryza sativa subsp. japonica (Rice), this protein is Calcium-dependent protein kinase 1.